A 56-amino-acid chain; its full sequence is Protein SspF (56 aa).

It belongs to the alpha/beta-type SASP family.

Functionally, may play some important role in either sporulation or the dormant spore. The polypeptide is Protein SspF (sspF) (Priestia megaterium (strain ATCC 12872 / QMB1551) (Bacillus megaterium)).